The primary structure comprises 120 residues: PYEKIGAELVKEVAKKTDDVAGDGTTTATVLAQALVREGLRNVAAGANPLGLKRGIEKAVEKITETLLKSAKEVETKDQIAATAGISAGDQTIGDLIAEAMDKVGNEGVITVEESNTFGL.

Position 23–27 (aspartate 23–threonine 27) interacts with ATP.

The protein belongs to the chaperonin (HSP60) family. In terms of assembly, forms a cylinder of 14 subunits composed of two heptameric rings stacked back-to-back. Interacts with the co-chaperonin GroES.

It is found in the cytoplasm. It carries out the reaction ATP + H2O + a folded polypeptide = ADP + phosphate + an unfolded polypeptide.. Functionally, together with its co-chaperonin GroES, plays an essential role in assisting protein folding. The GroEL-GroES system forms a nano-cage that allows encapsulation of the non-native substrate proteins and provides a physical environment optimized to promote and accelerate protein folding. In Mycolicibacterium rhodesiae (Mycobacterium rhodesiae), this protein is Chaperonin GroEL.